We begin with the raw amino-acid sequence, 321 residues long: Lipoyl synthase (321 aa).

Positions 68, 73, 79, 94, 98, 101, and 308 each coordinate [4Fe-4S] cluster. In terms of domain architecture, Radical SAM core spans 80–297 (FNHGTATFMI…REFAESIGFT (218 aa)).

Belongs to the radical SAM superfamily. Lipoyl synthase family. It depends on [4Fe-4S] cluster as a cofactor.

The protein localises to the cytoplasm. The enzyme catalyses [[Fe-S] cluster scaffold protein carrying a second [4Fe-4S](2+) cluster] + N(6)-octanoyl-L-lysyl-[protein] + 2 oxidized [2Fe-2S]-[ferredoxin] + 2 S-adenosyl-L-methionine + 4 H(+) = [[Fe-S] cluster scaffold protein] + N(6)-[(R)-dihydrolipoyl]-L-lysyl-[protein] + 4 Fe(3+) + 2 hydrogen sulfide + 2 5'-deoxyadenosine + 2 L-methionine + 2 reduced [2Fe-2S]-[ferredoxin]. It participates in protein modification; protein lipoylation via endogenous pathway; protein N(6)-(lipoyl)lysine from octanoyl-[acyl-carrier-protein]: step 2/2. In terms of biological role, catalyzes the radical-mediated insertion of two sulfur atoms into the C-6 and C-8 positions of the octanoyl moiety bound to the lipoyl domains of lipoate-dependent enzymes, thereby converting the octanoylated domains into lipoylated derivatives. The polypeptide is Lipoyl synthase (Shewanella sediminis (strain HAW-EB3)).